The primary structure comprises 110 residues: UPF0060 membrane protein Pnap_4944 (110 aa).

The next 4 helical transmembrane spans lie at 8 to 28 (ILFA…WLVL), 33 to 53 (SLLL…LLTL), 65 to 85 (YGGM…GIAL), and 88 to 108 (WDLS…MQPS).

It belongs to the UPF0060 family.

The protein localises to the cell inner membrane. This Polaromonas naphthalenivorans (strain CJ2) protein is UPF0060 membrane protein Pnap_4944.